The sequence spans 432 residues: Transcription factor E2F1 (432 aa).

2 disordered regions span residues 39 to 85 (DVGA…GRPP) and 98 to 126 (YLAGSSGPFRGRGRHPGKGVKSPGEKSRY). The cyclin A:CDK2 binding stretch occupies residues 65-106 (ATPQAPRPAPSAPRPALGRPPVKRRLDLETDHQYLAGSSGPF). The segment at 87–189 (KRRLDLETDH…KKSKNHIQWL (103 aa)) is interaction with BIRC2/c-IAP1. The DNA-binding element occupies 108-192 (GRGRHPGKGV…KNHIQWLGSR (85 aa)). An N6-acetyllysine mark is found at Lys-115, Lys-118, and Lys-123. The interval 151–172 (LNWAAEVLKVQKRRIYDITNVL) is leucine-zipper. Residues 156-192 (EVLKVQKRRIYDITNVLEGIQLIAKKSKNHIQWLGSR) carry the DEF box motif. N6-methyllysine; by SETD7 is present on Lys-183. The required for interaction with TRIM28 stretch occupies residues 190–377 (GSRTMVGIGQ…RLSPLVAADS (188 aa)). The tract at residues 193 to 282 (TMVGIGQRLE…AVDSAETFQI (90 aa)) is dimerization. The tract at residues 297–342 (PEESAEGISPGRTSYQETSGEDRNADSGTAGPPPSPPSTSPTLDPS) is disordered. The interval 363–432 (PMEEDRLSPL…DFGDLTPLDF (70 aa)) is transactivation. 2 positions are modified to phosphoserine: Ser-370 and Ser-398. Residues 404-421 (VDYHFGLEEGEGIRDLFD) are RB1 binding. Thr-428 carries the post-translational modification Phosphothreonine.

It belongs to the E2F/DP family. As to quaternary structure, component of the DRTF1/E2F transcription factor complex. Forms heterodimers with DP family members. The E2F1 complex binds specifically hypophosphorylated RB1, the interaction represses E2F1-driven transcription. During the cell cycle, RB1 becomes phosphorylated in mid-to-late G1 phase, detaches from the DRTF1/E2F complex, rendering E2F transcriptionally active. Interacts with TRRAP, which probably mediates its interaction with histone acetyltransferase complexes, leading to transcription activation. Binds TOPBP1 and EAPP. Interacts with ARID3A. Interacts with TRIM28; the interaction inhibits E2F1 acetylation through recruiting HDAC1 and represses its transcriptional activity. Interaction with KAT2B; the interaction acetylates E2F1 enhancing its DNA-binding and transcriptional activity. Interacts with BIRC2/c-IAP1 (via BIR domains). The complex TFDP1:E2F1 interacts with CEBPA; the interaction prevents CEBPA binding to target genes promoters and represses its transcriptional activity. Interacts with RRP1B. Interacts with HCFC1. Interacts with KMT2E; the interaction is probably indirect and is mediated via HCFC1. Interacts with DCAF5 and L3MBTL3; the interaction requires methylation at Lys-183 and is necessary to target E2F1 for ubiquitination by the CRL4-DCAF5 E3 ubiquitin ligase complex. Phosphorylated by CDK2 and cyclin A-CDK2 in the S-phase. Phosphorylation by CHEK2 stabilizes E2F1 upon DNA damage and regulates its effect on transcription and apoptosis. Phosphorylation at Ser-398 by GSK3B promotes interaction with USP11, leading to its deubiquitination and stabilization. Post-translationally, ubiquitinated via 'Lys-63'-linked ubiquitin, leading to its degradation. Deubiquitinated by USP11 following phosphorylation by GSK3B, promoting its stability. In terms of processing, acetylation stimulates DNA-binding. Enhanced under stress conditions such as DNA damage and inhibited by retinoblastoma protein RB1. Regulated by KAP1/TRIM28 which recruits HDAC1 to E2F1 resulting in deacetylation. Methylation at Lys-183 by SETD7 promotes E2F1 ubiquitin-dependent proteasomal degradation.

The protein resides in the nucleus. With respect to regulation, BIRC2/c-IAP1 stimulates its transcriptional activity. Transcription activator that binds DNA cooperatively with DP proteins through the E2 recognition site, 5'-TTTC[CG]CGC-3' found in the promoter region of a number of genes whose products are involved in cell cycle regulation or in DNA replication. The DRTF1/E2F complex functions in the control of cell-cycle progression from G1 to S phase. E2F1 binds preferentially RB1 in a cell-cycle dependent manner. It can mediate both cell proliferation and TP53/p53-dependent apoptosis. Blocks adipocyte differentiation by binding to specific promoters repressing CEBPA binding to its target gene promoters. Directly activates transcription of PEG10. Positively regulates transcription of RRP1B. The sequence is that of Transcription factor E2F1 from Rattus norvegicus (Rat).